A 160-amino-acid chain; its full sequence is MFPFMLFSTLFSSIFTEPREKMWICNSSDASLWYNYCDDMKFPISVKVEPCVTIKGTKGKLHLYYIARRDIQKLYLNLHISIKSMTLPMRKEVICREYGGDYSFCGALKGETVNTTIPFSFQGIRFSPGQYHCVVEAISGNSEEMLFCLNFTIIHYSSLN.

Positions 1–16 (MFPFMLFSTLFSSIFT) are cleaved as a signal peptide. 3 disulfide bridges follow: Cys-25–Cys-51, Cys-37–Cys-148, and Cys-95–Cys-105. Asn-26 carries N-linked (GlcNAc...) asparagine glycosylation. Asn-114 carries N-linked (GlcNAc...) asparagine glycosylation. An interaction with lipopolysaccharide region spans residues 119 to 123 (FSFQG). Asn-150 is a glycosylation site (N-linked (GlcNAc...) asparagine).

In terms of assembly, heterogeneous homomer formed from homodimers; disulfide-linked. Belongs to the lipopolysaccharide (LPS) receptor, a multi-protein complex containing at least CD14, LY96 and TLR4. Binds to the extracellular domains of TLR2 and TLR4. Ligand binding induces interaction with TLR4 and oligomerization of the complex. In terms of processing, N-glycosylated.

Its subcellular location is the secreted. The protein resides in the extracellular space. Its function is as follows. Binds bacterial lipopolysaccharide (LPS). Cooperates with TLR4 in the innate immune response to bacterial lipopolysaccharide (LPS), and with TLR2 in the response to cell wall components from Gram-positive and Gram-negative bacteria. Enhances TLR4-dependent activation of NF-kappa-B. Cells expressing both LY96 and TLR4, but not TLR4 alone, respond to LPS. The protein is Lymphocyte antigen 96 (LY96) of Bos taurus (Bovine).